A 950-amino-acid polypeptide reads, in one-letter code: Glycine dehydrogenase (decarboxylating) (950 aa).

N6-(pyridoxal phosphate)lysine is present on lysine 698.

The protein belongs to the GcvP family. As to quaternary structure, the glycine cleavage system is composed of four proteins: P, T, L and H. It depends on pyridoxal 5'-phosphate as a cofactor.

The enzyme catalyses N(6)-[(R)-lipoyl]-L-lysyl-[glycine-cleavage complex H protein] + glycine + H(+) = N(6)-[(R)-S(8)-aminomethyldihydrolipoyl]-L-lysyl-[glycine-cleavage complex H protein] + CO2. The glycine cleavage system catalyzes the degradation of glycine. The P protein binds the alpha-amino group of glycine through its pyridoxal phosphate cofactor; CO(2) is released and the remaining methylamine moiety is then transferred to the lipoamide cofactor of the H protein. This chain is Glycine dehydrogenase (decarboxylating), found in Neisseria meningitidis serogroup A / serotype 4A (strain DSM 15465 / Z2491).